A 964-amino-acid polypeptide reads, in one-letter code: Adhesion defective protein 3 (964 aa).

Positions 1 to 32 (MADFMDIEPSSHSAKASQYESSAPASSSLGNS) are disordered. Positions 16–32 (ASQYESSAPASSSLGNS) are enriched in low complexity. Residues 34 to 66 (PNESLDYYIYDYFVKHNFEEAAQAFLRESKIQI) form the LisH domain. Residues 69–83 (SSSSTAFSPSNNNAP) show a composition bias toward low complexity. Disordered regions lie at residues 69–125 (SSSS…EETN), 241–273 (PKGT…PASA), 476–523 (VSMK…TSRM), 572–596 (QTLS…MSMD), and 664–914 (APMI…KPIS). Polar residues-rich tracts occupy residues 93–103 (LASPSKISESI), 261–270 (AMQNPHNSFP), and 508–523 (TQAN…TSRM). The segment covering 575-589 (SSGNQPPQQSGPNPN) has biased composition (low complexity). Polar residues-rich tracts occupy residues 664-700 (APMI…TNRN), 707-716 (SPHQQFSPSA), 724-752 (RSMS…QNKE), 767-801 (AFPQ…SSLH), 818-828 (TIRTTERSTFS), and 857-868 (GGTNSISQDTTQ). Residues 869 to 885 (SLQMQSNSVNSSSMVDA) show a composition bias toward low complexity. The span at 894 to 905 (GDTSALDSNAKN) shows a compositional bias: polar residues.

The protein belongs to the FLO8 family.

The protein resides in the cytoplasm. Its subcellular location is the nucleus. Probable transcriptional regulator involved in cell adhesion. This chain is Adhesion defective protein 3 (adn3), found in Schizosaccharomyces pombe (strain 972 / ATCC 24843) (Fission yeast).